The sequence spans 431 residues: UDP-N-acetylglucosamine 1-carboxyvinyltransferase (431 aa).

Phosphoenolpyruvate is bound at residue 22-23 (KN). Arg102 is a UDP-N-acetyl-alpha-D-glucosamine binding site. Cys126 acts as the Proton donor in catalysis. A 2-(S-cysteinyl)pyruvic acid O-phosphothioketal modification is found at Cys126. Residues 131–135 (RPVDL), Asp316, and Ile338 each bind UDP-N-acetyl-alpha-D-glucosamine.

Belongs to the EPSP synthase family. MurA subfamily.

It localises to the cytoplasm. The catalysed reaction is phosphoenolpyruvate + UDP-N-acetyl-alpha-D-glucosamine = UDP-N-acetyl-3-O-(1-carboxyvinyl)-alpha-D-glucosamine + phosphate. It participates in cell wall biogenesis; peptidoglycan biosynthesis. Functionally, cell wall formation. Adds enolpyruvyl to UDP-N-acetylglucosamine. The protein is UDP-N-acetylglucosamine 1-carboxyvinyltransferase of Beijerinckia indica subsp. indica (strain ATCC 9039 / DSM 1715 / NCIMB 8712).